A 343-amino-acid polypeptide reads, in one-letter code: Programmed cell death protein 2 (343 aa).

Zn(2+) is bound by residues C134, C137, C145, C148, C154, H158, H167, and C171. An MYND-type; atypical zinc finger spans residues C134–C171.

In terms of processing, ubiquitinated by PRKN, promoting proteasomal degradation.

The protein resides in the nucleus. May be a DNA-binding protein with a regulatory function. May play an important role in cell death and/or in regulation of cell proliferation. The sequence is that of Programmed cell death protein 2 (Pdcd2) from Mus musculus (Mouse).